Here is a 438-residue protein sequence, read N- to C-terminus: Chaperone SurA (438 aa).

The first 28 residues, 1-28, serve as a signal peptide directing secretion; the sequence is MKTMNPYIRHLILLICCLGGMLAQPLSA. PpiC domains are found at residues 181 to 282 and 292 to 390; these read EEEY…KLVS and VQQT…QVLE.

The protein resides in the periplasm. It carries out the reaction [protein]-peptidylproline (omega=180) = [protein]-peptidylproline (omega=0). Its function is as follows. Chaperone involved in the correct folding and assembly of outer membrane proteins. Recognizes specific patterns of aromatic residues and the orientation of their side chains, which are found more frequently in integral outer membrane proteins. May act in both early periplasmic and late outer membrane-associated steps of protein maturation. The sequence is that of Chaperone SurA from Dechloromonas aromatica (strain RCB).